We begin with the raw amino-acid sequence, 267 residues long: Serine/arginine-rich splicing factor 7 (267 aa).

The RRM domain occupies 40-113; it reads TKVYVGNLGT…SRVRVELSTG (74 aa). The residue at position 53 (Lys53) is an N6-acetyllysine; alternate. Lys53 is covalently cross-linked (Glycyl lysine isopeptide (Lys-Gly) (interchain with G-Cter in SUMO2); alternate). Ser61 carries the phosphoserine modification. The tract at residues 110–127 is sufficient for interaction with NXF1; the sequence is LSTGMPRRSRFDRPPARR. A CCHC-type zinc finger spans residues 133–150; it reads DRCYECGEKGHYAYDCHR. Over residues 152–209 the composition is skewed to basic residues; the sequence is SRRRRSRSRSRSHSRSRGRRYSRSRSRSRGRRSRSASPRRSRSVSLRRSRSASLRRSR. The tract at residues 152-267 is disordered; that stretch reads SRRRRSRSRS…HRSASPERMD (116 aa). Repeat copies occupy residues 182-189, 190-197, 198-205, and 206-213. Residues 182–255 form a 6 X 8 AA repeats of R-R-S-R-S-X-S-X region; it reads RRSRSASPRR…SPKRSRSPSG (74 aa). 3 positions are modified to phosphoserine: Ser192, Ser194, and Ser196. Phosphoserine occurs at positions 210, 212, 221, 223, and 225. Residues 223–251 are compositionally biased toward basic residues; the sequence is SRSRSRSRSISRPRSSRSKSRSPSPKRSR. The stretch at 240–247 is one 5; approximate repeat; the sequence is SKSRSPSP. Residues 248–255 form a 6; approximate repeat; sequence KRSRSPSG. Ser260 and Ser262 each carry phosphoserine.

The protein belongs to the splicing factor SR family. Found in large molecular weight complexes containing CCNL1 and the p110 isoforms of either CDC2L1 or CDC2L2. Interacts with CCNL2 and CPSF6. Interacts with NXF1. Interacts with YTHDC1. In terms of processing, extensively phosphorylated on serine residues in the RS domain.

Its subcellular location is the nucleus. It localises to the cytoplasm. In terms of biological role, required for pre-mRNA splicing. Represses the splicing of MAPT/Tau exon 10. May function as export adapter involved in mRNA nuclear export such as of histone H2A. Binds mRNA which is thought to be transferred to the NXF1-NXT1 heterodimer for export (TAP/NXF1 pathway); enhances NXF1-NXT1 RNA-binding activity. RNA-binding is semi-sequence specific. The sequence is that of Serine/arginine-rich splicing factor 7 (Srsf7) from Mus musculus (Mouse).